Reading from the N-terminus, the 122-residue chain is Large ribosomal subunit protein bL20 (122 aa).

It belongs to the bacterial ribosomal protein bL20 family.

Binds directly to 23S ribosomal RNA and is necessary for the in vitro assembly process of the 50S ribosomal subunit. It is not involved in the protein synthesizing functions of that subunit. This is Large ribosomal subunit protein bL20 (rplT) from Treponema pallidum (strain Nichols).